An 83-amino-acid chain; its full sequence is Male-specific opa-containing protein (83 aa).

A signal peptide spans 1 to 18; that stretch reads MNFIQIAVLFVLVAVALA. The disordered stretch occupies residues 23–83; sequence DPANLPAPEA…NVNHNVITIG (61 aa). Residues 28–49 are compositionally biased toward low complexity; it reads PAPEAAAAPPAAAAAPPAAAAA. Over residues 50–59 the composition is skewed to pro residues; sequence PPAPPAPPAA.

Adult male abdomen.

May be a male specific regulatory factor. In Drosophila melanogaster (Fruit fly), this protein is Male-specific opa-containing protein (msopa).